Reading from the N-terminus, the 411-residue chain is Adenylosuccinate synthetase (411 aa).

GTP-binding positions include 11 to 17 (GDEGKGK) and 39 to 41 (GHT). D12 acts as the Proton acceptor in catalysis. Mg(2+)-binding residues include D12 and G39. IMP contacts are provided by residues 12–15 (DEGK), 37–40 (NAGH), T121, R135, Q215, T230, and R294. H40 (proton donor) is an active-site residue. 290 to 296 (TTTKRPR) is a substrate binding site. GTP-binding positions include R296, 322-324 (KLD), and 400-402 (STS).

The protein belongs to the adenylosuccinate synthetase family. As to quaternary structure, homodimer. Mg(2+) is required as a cofactor.

The protein resides in the cytoplasm. It catalyses the reaction IMP + L-aspartate + GTP = N(6)-(1,2-dicarboxyethyl)-AMP + GDP + phosphate + 2 H(+). It participates in purine metabolism; AMP biosynthesis via de novo pathway; AMP from IMP: step 1/2. Functionally, plays an important role in the de novo pathway of purine nucleotide biosynthesis. Catalyzes the first committed step in the biosynthesis of AMP from IMP. The sequence is that of Adenylosuccinate synthetase from Helicobacter acinonychis (strain Sheeba).